We begin with the raw amino-acid sequence, 420 residues long: Transcription activator GLK1 (420 aa).

The interval 74-152 is disordered; the sequence is GDFSNHMNAS…NRISNNEGKR (79 aa). Basic and acidic residues predominate over residues 106 to 117; it reads KGEEVVSKRDDV. The span at 135–147 shows a compositional bias: low complexity; sequence SSSASSKNNRISN. The segment at residues 150 to 209 is a DNA-binding region (myb-like GARP); it reads GKRKVKVDWTPELHRRFVEAVEQLGVDKAVPSRILELMGVHCLTRHNVASHLQKYRSHRK.

Interacts with NAC92. As to expression, expressed in rosette and cauline leaves. Expressed at low levels in cotyledons and shoots.

It is found in the nucleus. Functionally, transcriptional activator that functions with GLK2 to promote chloroplast development. Acts as an activator of nuclear photosynthetic genes involved in chlorophyll biosynthesis, light harvesting, and electron transport. Acts in a cell-autonomous manner to coordinate and maintain the photosynthetic apparatus within individual cells. May function in photosynthetic capacity optimization by integrating responses to variable environmental and endogenous cues. Prevents premature senescence. This chain is Transcription activator GLK1 (GLK1), found in Arabidopsis thaliana (Mouse-ear cress).